We begin with the raw amino-acid sequence, 768 residues long: Ribonucleoside-diphosphate reductase large chain (768 aa).

ATP is bound by residues 7-8 (SK) and 13-19 (EKLGIDL). Positions 196 and 211 each coordinate GDP. Cysteines 212 and 437 form a disulfide. DTTP is bound by residues 220–222 (DSI), Lys-237, and Arg-250. Asn-420 lines the GDP pocket. Asn-420 serves as the catalytic Proton acceptor. The active-site Cysteine radical intermediate is Cys-422. Glu-424 serves as a coordination point for GDP. Glu-424 serves as the catalytic Proton acceptor.

It belongs to the ribonucleoside diphosphate reductase large chain family. Heterodimer of a large and a small subunit.

The catalysed reaction is a 2'-deoxyribonucleoside 5'-diphosphate + [thioredoxin]-disulfide + H2O = a ribonucleoside 5'-diphosphate + [thioredoxin]-dithiol. Under complex allosteric control mediated by deoxynucleoside triphosphates and ATP binding to separate specificity and activation sites on the large subunit. The type of nucleotide bound at the specificity site determines substrate preference. It seems probable that ATP makes the enzyme reduce CDP and UDP, dGTP favors ADP reduction and dTTP favors GDP reduction. Stimulated by ATP and inhibited by dATP binding to the activity site. Provides the precursors necessary for DNA synthesis. Catalyzes the biosynthesis of deoxyribonucleotides from the corresponding ribonucleotides. This Encephalitozoon cuniculi (strain GB-M1) (Microsporidian parasite) protein is Ribonucleoside-diphosphate reductase large chain.